The primary structure comprises 339 residues: Vomeronasal type-1 receptor A14 (339 aa).

Over 1–42 (MMGVQICQGMMSEIPFFSPPPQFSYMMNKNIRLHTDSNIRNT) the chain is Extracellular. A helical transmembrane segment spans residues 43-63 (FFTDIGIGISANSLLLLFNIF). Topologically, residues 64-75 (KLTRGQRSRLTD) are cytoplasmic. A helical transmembrane segment spans residues 76–96 (LPIGLLSLINLLMLLMAAFIA). The Extracellular segment spans residues 97-119 (TDTFISWKGWDDIICKFLVYLYR). Cys111 and Cys198 are joined by a disulfide. Residues 120 to 140 (TFRGLSLCTSCLLSVLQAIIL) form a helical membrane-spanning segment. Residues 141–160 (SPRSSCLAKFKHKPPHHISC) lie on the Cytoplasmic side of the membrane. Residues 161–181 (AILSLSVLYMFIGSHLLVSII) form a helical membrane-spanning segment. Topologically, residues 182–213 (ATPNLTTNDFIHVTQSCSILPMSYLMQCMFST) are extracellular. N-linked (GlcNAc...) asparagine glycosylation occurs at Asn185. The chain crosses the membrane as a helical span at residues 214–234 (LLAIRDVFLISLMVLSTWYMV). Over 235 to 264 (ALLCRHRKQTRHLQGTSLSPKASPEQRATR) the chain is Cytoplasmic. Residues 265-285 (SILMLMSLFVLMSVFDSIVCS) traverse the membrane as a helical segment. The Extracellular portion of the chain corresponds to 286–296 (SRTMYLNDPIS). Residues 297–317 (YSIQLFMVHIYATVSPFVFIV) traverse the membrane as a helical segment. At 318-339 (TEKHIVNFLRSVCEGDECLNIH) the chain is on the cytoplasmic side.

The protein belongs to the G-protein coupled receptor 1 family.

The protein localises to the cell membrane. In terms of biological role, putative pheromone receptor implicated in the regulation of social as well as reproductive behavior. In Rattus norvegicus (Rat), this protein is Vomeronasal type-1 receptor A14.